A 472-amino-acid polypeptide reads, in one-letter code: MAFSSSSLRRSLKLGRGSRPGIPHVTDGTVTYGRRAGTMRDRGASLRPGAGGGGGDGERPKRASSLPAPASSSPGDPFWSFSVYATYVKVTNKIRFVPGMLADCTLPYLPNLKNILAGRYPNFHFTTTAHGGNLSEVAFLAVECPRNPVRAAPTVVRCSLNEIAISLMRPLEGPVPAGGLTFYLLPVTLVKPHGLYLKIQKDRAAVGAATTCSQDGAHLNSEQPQVFFSGTAAPAREGGELPFLLAQRTPRFERGGFCKVHVTQGVTCPVNAVKLSKHYVRLPVCELRGDGGAGAAAPSQIKVGVTLVREAMLAFRYNPYLFSPWCWAEATVPIHYYGPPVIVPAGQAARVVYGNVYYAPMLDELTAVIAPPLDGDGDRRFGLMGCCEWPKGGHAELAVENRTCFLQVLRTGDRLGYAIFFIAPRIPMVNLLPARYRENLSVAVTVVGGVTLNASKLHKIAELAQPLATQRD.

Low complexity-rich tracts occupy residues 1–21 (MAFS…SRPG) and 63–74 (ASSLPAPASSSP). The disordered stretch occupies residues 1 to 74 (MAFSSSSLRR…SLPAPASSSP (74 aa)).

This is an uncharacterized protein from Equus caballus (Horse).